A 169-amino-acid chain; its full sequence is UPF0725 protein At2g19200 (169 aa).

It belongs to the UPF0725 (EMB2204) family.

In Arabidopsis thaliana (Mouse-ear cress), this protein is UPF0725 protein At2g19200.